Consider the following 971-residue polypeptide: Exportin-2 (971 aa).

An N-acetylmethionine modification is found at M1. One can recognise an Importin N-terminal domain in the interval 29 to 102 (AEKFLESVEG…KANIVHLMLS (74 aa)). Residue S112 is modified to Phosphoserine. An N6-acetyllysine mark is found at K574 and K824. The residue at position 931 (S931) is a Phosphoserine.

The protein belongs to the XPO2/CSE1 family. In terms of assembly, found in a complex with CSE1L/XPO2, Ran and KPNA2. Binds with high affinity to importin-alpha only in the presence of RanGTP. The complex is dissociated by the combined action of RanBP1 and RanGAP1. Interacts with CFTR.

It localises to the cytoplasm. Its subcellular location is the nucleus. Export receptor for importin-alpha. Mediates importin-alpha re-export from the nucleus to the cytoplasm after import substrates (cargos) have been released into the nucleoplasm. In the nucleus binds cooperatively to importin-alpha and to the GTPase Ran in its active GTP-bound form. Docking of this trimeric complex to the nuclear pore complex (NPC) is mediated through binding to nucleoporins. Upon transit of a nuclear export complex into the cytoplasm, disassembling of the complex and hydrolysis of Ran-GTP to Ran-GDP (induced by RANBP1 and RANGAP1, respectively) cause release of the importin-alpha from the export receptor. CSE1L/XPO2 then return to the nuclear compartment and mediate another round of transport. The directionality of nuclear export is thought to be conferred by an asymmetric distribution of the GTP- and GDP-bound forms of Ran between the cytoplasm and nucleus. This Bos taurus (Bovine) protein is Exportin-2 (CSE1L).